The chain runs to 571 residues: Double-stranded RNA-binding protein Staufen homolog 2 (571 aa).

In terms of domain architecture, DRBM 1 spans 8–75; that stretch reads TPMCLVNELA…ANKALTESTL (68 aa). Phosphoserine occurs at positions 9 and 13. Arg-18 carries the phosphothreonine modification. Ser-21 carries the phosphoserine modification. Disordered stretches follow at residues 71–94 and 178–203; these read TEST…PGSI and ALQN…DDKD. Polar residues predominate over residues 83–94; that stretch reads PKSNVNNNPGSI. Residues 95 to 181 enclose the DRBM 2 domain; that stretch reads TPTVELNGLA…AMKALQALQN (87 aa). Ser-188 is subject to Phosphoserine. Residues 194–203 are compositionally biased toward basic and acidic residues; it reads SGKEMDDDKD. DRBM domains are found at residues 207 to 274 and 307 to 375; these read SEIS…ELKK and NPIS…QLGY. 2 consecutive short sequence motifs (nuclear localization signal) follow at residues 273–317 and 373–412; these read KKLP…QIQQ and LGYK…PKGI. Positions 381–571 are required for dendritic transport; that stretch reads LQDQLDKTGE…QDCKKSKSVI (191 aa). A disordered region spans residues 382 to 413; sequence QDQLDKTGENKGWSGPKPGFPEPANNTPKGIL. Ser-395, Ser-416, Ser-426, Ser-440, Ser-456, and Ser-493 each carry phosphoserine. Positions 546–571 are disordered; it reads LREKADNNQANPGSITQDCKKSKSVI. Polar residues predominate over residues 552–562; the sequence is NNQANPGSITQ.

Identified in a mRNP complex, at least composed of DHX9, DDX3X, ELAVL1, HNRNPU, IGF2BP1, ILF3, PABPC1, PCBP2, PTBP2, STAU1, STAU2, SYNCRIP and YBX1. Interacts with the exportin XPO5. This requires RNA and RAN bound to GTP. Interacts with microtubules. Isoform 2 and isoform 3 may also interact with ribosomes, and this association is independent of translation. Interacts with TRIM71 (via NHL repeats) in an RNA-dependent manner. In terms of tissue distribution, expressed in both somata and dendrites of hippocampal neurons.

It is found in the nucleus. The protein localises to the nucleolus. It localises to the cytoplasm. Its subcellular location is the endoplasmic reticulum. RNA-binding protein required for the microtubule-dependent transport of neuronal RNA from the cell body to the dendrite. As protein synthesis occurs within the dendrite, the localization of specific mRNAs to dendrites may be a prerequisite for neurite outgrowth and plasticity at sites distant from the cell body. The protein is Double-stranded RNA-binding protein Staufen homolog 2 (Stau2) of Rattus norvegicus (Rat).